The following is a 411-amino-acid chain: Putative binding protein BRA0748/BS1330_II0741 (411 aa).

An N-terminal signal peptide occupies residues M1–A25.

This sequence belongs to the bacterial solute-binding protein 1 family. In terms of assembly, the complex is composed of two ATP-binding proteins (BRA0745), two transmembrane proteins (BRA0749) and a solute-binding protein (BRA0748).

It is found in the periplasm. Its function is as follows. Probably part of an ABC transporter complex. In Brucella suis biovar 1 (strain 1330), this protein is Putative binding protein BRA0748/BS1330_II0741.